The chain runs to 199 residues: 5'-deoxynucleotidase ESA_00928 (199 aa).

Substrate contacts are provided by residues 18–19 and His-33; that span reads RW. The HD domain maps to 30 to 142; the sequence is VSEHSLQVAM…VKQADALCAY (113 aa). His-33, His-68, and Asp-69 together coordinate a divalent metal cation. Residues Asp-69, 77 to 80, and Asp-137 each bind substrate; that span reads DLPT. Asp-137 is an a divalent metal cation binding site.

The protein belongs to the 5DNU family. Homodimer. Requires a divalent metal cation as cofactor.

The protein localises to the cytoplasm. It carries out the reaction a 2'-deoxyribonucleoside 5'-phosphate + H2O = a 2'-deoxyribonucleoside + phosphate. Its function is as follows. Catalyzes the strictly specific dephosphorylation of 2'-deoxyribonucleoside 5'-monophosphates. This Cronobacter sakazakii (strain ATCC BAA-894) (Enterobacter sakazakii) protein is 5'-deoxynucleotidase ESA_00928.